Consider the following 149-residue polypeptide: Transthyretin (149 aa).

The N-terminal stretch at 1-20 (MAFHSLLLLCLAGLVFLSEA) is a signal peptide. Position 32 is a sulfocysteine (cysteine 32). Lysine 37 is an L-thyroxine binding site. A 4-carboxyglutamate modification is found at glutamate 64. Residues glutamate 76 and serine 139 each contribute to the L-thyroxine site.

It belongs to the transthyretin family. As to quaternary structure, homotetramer. Dimer of dimers. In the homotetramer, subunits assemble around a central channel that can accommodate two ligand molecules. Interacts with RBP4. Sulfonation of the reactive cysteine Cys-32 enhances the stability of the native conformation of TTR, avoiding misassembly of the protein leading to amyloid formation. As to expression, highly expressed in the choroid plexus.

The protein resides in the secreted. Functionally, thyroid hormone-binding protein. Probably transports thyroxine from the bloodstream to the brain. This Sminthopsis macroura (Stripe-faced dunnart) protein is Transthyretin (TTR).